A 148-amino-acid chain; its full sequence is Large ribosomal subunit protein bL9 (148 aa).

Belongs to the bacterial ribosomal protein bL9 family.

Its function is as follows. Binds to the 23S rRNA. The sequence is that of Large ribosomal subunit protein bL9 from Ruminiclostridium cellulolyticum (strain ATCC 35319 / DSM 5812 / JCM 6584 / H10) (Clostridium cellulolyticum).